A 35-amino-acid chain; its full sequence is Pheromone-binding protein 2 (35 aa).

Belongs to the PBP/GOBP family. As to quaternary structure, homodimer. In terms of tissue distribution, antenna.

Functionally, this major soluble protein in olfactory sensilla of male moths might serve to solubilize the extremely hydrophobic pheromone molecules and to transport pheromone through the aqueous lymph to receptors located on olfactory cilia. This is Pheromone-binding protein 2 from Lymantria dispar (Gypsy moth).